The primary structure comprises 184 residues: Acireductone dioxygenase (184 aa).

Fe(2+) contacts are provided by histidine 97, histidine 99, glutamate 103, and histidine 141. Residues histidine 97, histidine 99, glutamate 103, and histidine 141 each coordinate Ni(2+).

This sequence belongs to the acireductone dioxygenase (ARD) family. Monomer. Fe(2+) is required as a cofactor. The cofactor is Ni(2+).

The enzyme catalyses 1,2-dihydroxy-5-(methylsulfanyl)pent-1-en-3-one + O2 = 3-(methylsulfanyl)propanoate + CO + formate + 2 H(+). It carries out the reaction 1,2-dihydroxy-5-(methylsulfanyl)pent-1-en-3-one + O2 = 4-methylsulfanyl-2-oxobutanoate + formate + 2 H(+). It participates in amino-acid biosynthesis; L-methionine biosynthesis via salvage pathway; L-methionine from S-methyl-5-thio-alpha-D-ribose 1-phosphate: step 5/6. In terms of biological role, catalyzes 2 different reactions between oxygen and the acireductone 1,2-dihydroxy-3-keto-5-methylthiopentene (DHK-MTPene) depending upon the metal bound in the active site. Fe-containing acireductone dioxygenase (Fe-ARD) produces formate and 2-keto-4-methylthiobutyrate (KMTB), the alpha-ketoacid precursor of methionine in the methionine recycle pathway. Ni-containing acireductone dioxygenase (Ni-ARD) produces methylthiopropionate, carbon monoxide and formate, and does not lie on the methionine recycle pathway. The protein is Acireductone dioxygenase of Parvibaculum lavamentivorans (strain DS-1 / DSM 13023 / NCIMB 13966).